A 592-amino-acid chain; its full sequence is NADH-quinone oxidoreductase subunit C/D (592 aa).

Residues 1–183 (MSAAQSPTAQ…DPYTLTVEGQ (183 aa)) are NADH dehydrogenase I subunit C. The tract at residues 207–592 (DYMFLNLGPN…IDFVMADVDR (386 aa)) is NADH dehydrogenase I subunit D.

It in the N-terminal section; belongs to the complex I 30 kDa subunit family. This sequence in the C-terminal section; belongs to the complex I 49 kDa subunit family. In terms of assembly, NDH-1 is composed of 13 different subunits. Subunits NuoB, CD, E, F, and G constitute the peripheral sector of the complex.

The protein resides in the cell inner membrane. The enzyme catalyses a quinone + NADH + 5 H(+)(in) = a quinol + NAD(+) + 4 H(+)(out). In terms of biological role, NDH-1 shuttles electrons from NADH, via FMN and iron-sulfur (Fe-S) centers, to quinones in the respiratory chain. The immediate electron acceptor for the enzyme in this species is believed to be ubiquinone. Couples the redox reaction to proton translocation (for every two electrons transferred, four hydrogen ions are translocated across the cytoplasmic membrane), and thus conserves the redox energy in a proton gradient. The polypeptide is NADH-quinone oxidoreductase subunit C/D (Chromohalobacter salexigens (strain ATCC BAA-138 / DSM 3043 / CIP 106854 / NCIMB 13768 / 1H11)).